A 200-amino-acid chain; its full sequence is LexA repressor (200 aa).

The segment at residues 28-48 (RAEISNRLGFRSANAAEEHLK) is a DNA-binding region (H-T-H motif). Active-site for autocatalytic cleavage activity residues include serine 121 and lysine 158.

It belongs to the peptidase S24 family. As to quaternary structure, homodimer.

The catalysed reaction is Hydrolysis of Ala-|-Gly bond in repressor LexA.. In terms of biological role, represses a number of genes involved in the response to DNA damage (SOS response), including recA and lexA. In the presence of single-stranded DNA, RecA interacts with LexA causing an autocatalytic cleavage which disrupts the DNA-binding part of LexA, leading to derepression of the SOS regulon and eventually DNA repair. The chain is LexA repressor from Hahella chejuensis (strain KCTC 2396).